The chain runs to 460 residues: Piperamide synthase (460 aa).

The tract at residues 1 to 23 is disordered; it reads MASSQLEFNVERKQPELLGPAEP. Catalysis depends on proton acceptor residues His168 and Asp383. The Microbody targeting signal signature appears at 458–460; that stretch reads SRM.

Belongs to the plant acyltransferase family. Monomer. Confined to immature fruits perisperm. Also detectable in roots.

It localises to the cytoplasm. It carries out the reaction piperidine + (E,E)-piperoyl-CoA = piperine + CoA + H(+). The protein operates within aromatic compound metabolism. Functionally, involved in the biosynthesis of aromatic piperamides natural products such as piperine (1-piperoyl-piperidine), the pungent principle contributing, together with several terpenoids, to the aromatic properties of black pepper fruits, and displaying numerous pharmacological activities such as antiproliferative, antitumor, antiangiogenesis, antioxidant, antidiabetic, antiobesity, cardioprotective, antimicrobial, antiaging, and immunomodulatory effects. Can use piperidine and benzylamine as acceptors and various CoA-esters with aliphatic and aromatic amines as CoA-donors, including piperoyl-CoA, hexanoyl-CoA and octanoyl-CoA, and, to a lower extent, benzoyl-CoA. Mediates the conversion of piperidine to three piperine isomers in the presence of piperoyl-CoA. Its ability to convert in vitro piperidine to hexanoylpiperidine in the presence of hexanoyl-CoA, and to octanoylpiperidine in the presence of octanoyl-CoA is not confirmed in vivo according to fruits metabolome analysis. The protein is Piperamide synthase of Piper nigrum (Black pepper).